Consider the following 788-residue polypeptide: MRARPRPRPLWATVLALGALAGVGVGGPNICTTRGVSSCQQCLAVSPMCAWCSDEALPLGSPRCDLKENLLKDNCAPESIEFPVSEARVLEDRPLSDKGSGDSSQVTQVSPQRIALRLRPDDSKNFSIQVRQVEDYPVDIYYLMDLSYSMKDDLWSIQNLGTKLATQMRKLTSNLRIGFGAFVDKPVSPYMYISPPEALENPCYDMKTTCLPMFGYKHVLTLTDQVTRFNEEVKKQSVSRNRDAPEGGFDAIMQATVCDEKIGWRNDASHLLVFTTDAKTHIALDGRLAGIVQPNDGQCHVGSDNHYSASTTMDYPSLGLMTEKLSQKNINLIFAVTENVVNLYQNYSELIPGTTVGVLSMDSSNVLQLIVDAYGKIRSKVELEVRDLPEELSLSFNATCLNNEVIPGLKSCMGLKIGDTVSFSIEAKVRGCPQEKEKSFTIKPVGFKDSLIVQVTFDCDCACQAQAEPNSHRCNNGNGTFECGVCRCGPGWLGSQCECSEEDYRPSQQDECSPREGQPVCSQRGECLCGQCVCHSSDFGKITGKYCECDDFSCVRYKGEMCSGHGQCSCGDCLCDSDWTGYYCNCTTRTDTCMSSNGLLCSGRGKCECGSCVCIQPGSYGDTCEKCPTCPDACTFKKECVECKKFDRGALHDENTCNRYCRDEIESVKELKDTGKDAVNCTYKNEDDCVVRFQYYEDSSGKSILYVVEEPECPKGPDILVVLLSVMGAILLIGLAALLIWKLLITIHDRKEFAKFEEERARAKWDTANNPLYKEATSTFTNITYRGT.

An N-terminal signal peptide occupies residues 1–26; the sequence is MRARPRPRPLWATVLALGALAGVGVG. The Extracellular portion of the chain corresponds to 27 to 718; that stretch reads GPNICTTRGV…EEPECPKGPD (692 aa). The PSI domain occupies 30 to 76; it reads ICTTRGVSSCQQCLAVSPMCAWCSDEALPLGSPRCDLKENLLKDNCA. 19 disulfides stabilise this stretch: Cys31/Cys49, Cys39/Cys461, Cys42/Cys64, Cys52/Cys75, Cys203/Cys210, Cys258/Cys299, Cys400/Cys412, Cys432/Cys459, Cys463/Cys483, Cys474/Cys486, Cys488/Cys497, Cys499/Cys529, Cys512/Cys527, Cys521/Cys532, Cys534/Cys547, Cys549/Cys570, Cys554/Cys568, Cys562/Cys573, and Cys575/Cys584. N-linked (GlcNAc...) asparagine glycosylation occurs at Asn125. In terms of domain architecture, VWFA spans 135 to 377; the sequence is DYPVDIYYLM…QLIVDAYGKI (243 aa). Positions 147 and 149 each coordinate Mg(2+). Residues Ser149, Asp152, Asp153, and Asp184 each contribute to the Ca(2+) site. Residues 203 to 210 are involved in CX3CL1-, NRG1-, FGF1- and IGF1-binding; sequence CYDMKTTC. 5 residues coordinate Ca(2+): Asn241, Asp243, Pro245, Glu246, and Asp277. Glu246 serves as a coordination point for Mg(2+). The CX3CL1-binding stretch occupies residues 293-313; that stretch reads QPNDGQCHVGSDNHYSASTTM. N-linked (GlcNAc...) asparagine glycosylation is present at Asn346. Met361 is a binding site for Ca(2+). Residue Asn397 is glycosylated (N-linked (GlcNAc...) asparagine). I-EGF domains lie at 463–498, 499–548, 549–585, and 586–625; these read CQAQ…SQCE, CSEE…KYCE, CDDF…YYCN, and CTTR…DTCE. N-linked (GlcNAc...) asparagine glycosylation occurs at Asn478. Asn585 carries an N-linked (GlcNAc...) asparagine glycan. Intrachain disulfides connect Cys586-Cys609, Cys593-Cys607, Cys601-Cys612, Cys614-Cys624, Cys627-Cys630, Cys634-Cys681, Cys640-Cys661, Cys643-Cys657, and Cys689-Cys713. A glycan (N-linked (GlcNAc...) asparagine) is linked at Asn680. Residues 719-741 traverse the membrane as a helical segment; that stretch reads ILVVLLSVMGAILLIGLAALLIW. Topologically, residues 742-788 are cytoplasmic; sequence KLLITIHDRKEFAKFEEERARAKWDTANNPLYKEATSTFTNITYRGT. Residue Thr767 is modified to Phosphothreonine. Phosphotyrosine is present on Tyr773. The LIR motif lies at 777–783; sequence TSTFTNI. The residue at position 779 (Thr779) is a Phosphothreonine; by PDPK1 and PKB/AKT1; in vitro. Phosphotyrosine is present on Tyr785.

This sequence belongs to the integrin beta chain family. In terms of assembly, heterodimer of an alpha and a beta subunit. Beta-3 (ITGB3) associates with either alpha-IIb (ITGA2B) or alpha-V (ITGAV). Isoform Beta-3C interacts with FLNB. Interacts with COMP. Interacts with PDIA6 following platelet stimulation. Interacts with SYK; upon activation by ITGB3 promotes platelet adhesion. Interacts with MYO10. Interacts with DAB2. Interacts with FERMT2. Interacts with EMP2; regulates the levels of the heterodimer ITGA5:ITGB3 integrin expression on the plasma membrane. Integrin ITGAV:ITGB3 interacts with FBLN5 (via N-terminus). ITGAV:ITGB3 interacts with CCN3. ITGAV:ITGB3 and ITGA2B:ITGB3 interact with SELP (via C-type lectin domain); the interaction mediates cell-cell interaction and adhesion. ITGAV:ITGB3 is found in a ternary complex with CX3CR1 and CX3CL1. ITGAV:ITGB3 is found in a ternary complex with NRG1 and ERBB3. ITGAV:ITGB3 is found in a ternary complex with FGF1 and FGFR1. ITGAV:ITGB3 interacts with FGF2; it is likely that FGF2 can simultaneously bind ITGAV:ITGB3 and FGF receptors. ITGAV:ITGB3 binds to IL1B. ITGAV:ITGB3 is found in a ternary complex with IGF1 and IGF1R. ITGAV:ITGB3 interacts with IGF2. ITGAV:ITGB3 interacts with FBN1. ITGAV:ITGB3 interacts with CD9, CD81 and CD151 (via second extracellular domain). Interacts (via the allosteric site (site 2)) with CXCL12 in a CXCR4-independent manner. Interacts with MXRA8/DICAM; the interaction inhibits ITGAV:ITGB3 heterodimer formation. ITGAV:ITGB3 interacts with PTN. Forms a complex with PTPRZ1 and PTN that stimulates endothelial cell migration through ITGB3 Tyr-773 phosphorylation. ITGAV:ITGB3 interacts with SLC6A4. Interacts with SLC6A4 (via C-terminus); this interaction regulates SLC6A4 trafficking. ITGA2B:ITGB3 interacts with PPIA/CYPA; the interaction is ROS and PPIase activity-dependent and is increased in the presence of thrombin. Interacts with tensin TNS3; TNS3 also interacts with PEAK1, thus acting as an adapter molecule to bridge the association of PEAK1 with ITGB3. Interacts with TM4SF19. As to quaternary structure, (Microbial infection) Integrin ITGAV:ITGB3 interacts with herpes virus 8/HHV-8 glycoprotein B. (Microbial infection) Integrin ITGAV:ITGB3 interacts with coxsackievirus A9 capsid proteins. In terms of assembly, (Microbial infection) Interacts with Hantaan virus glycoprotein G. As to quaternary structure, (Microbial infection) Integrin ITGAV:ITGB3 interacts with cytomegalovirus/HHV-5 gH:gL proteins. (Microbial infection) Integrin ITGA5:ITGB3 interacts with human metapneumovirus fusion protein. In terms of assembly, (Microbial infection) Integrin ITGAV:ITGB3 interacts with human parechovirus 1 capsid proteins. As to quaternary structure, (Microbial infection) Integrin ITGAV:ITGB3 interacts with west nile virus envelope protein E. (Microbial infection) Interacts with HIV-1 Tat. ITGAV:ITGB3 interacts with AGRA2. Post-translationally, phosphorylated on tyrosine residues in response to thrombin-induced platelet aggregation. Probably involved in outside-in signaling. A peptide (AA 740-762) is capable of binding GRB2 only when both Tyr-773 and Tyr-785 are phosphorylated. Phosphorylation of Thr-779 inhibits SHC binding. Isoform beta-3A and isoform beta-3C are widely expressed. Isoform beta-3A is specifically expressed in osteoblast cells; isoform beta-3C is specifically expressed in prostate and testis.

It localises to the cell membrane. It is found in the cell projection. The protein resides in the lamellipodium membrane. The protein localises to the cell junction. Its subcellular location is the focal adhesion. It localises to the postsynaptic cell membrane. It is found in the synapse. In terms of biological role, integrin alpha-V/beta-3 (ITGAV:ITGB3) is a receptor for cytotactin, fibronectin, laminin, matrix metalloproteinase-2, osteopontin, osteomodulin, prothrombin, thrombospondin, vitronectin and von Willebrand factor. Integrin alpha-IIb/beta-3 (ITGA2B:ITGB3) is a receptor for fibronectin, fibrinogen, plasminogen, prothrombin, thrombospondin and vitronectin. Integrins alpha-IIb/beta-3 and alpha-V/beta-3 recognize the sequence R-G-D in a wide array of ligands. Integrin alpha-IIb/beta-3 recognizes the sequence H-H-L-G-G-G-A-K-Q-A-G-D-V in fibrinogen gamma chain. Following activation integrin alpha-IIb/beta-3 brings about platelet/platelet interaction through binding of soluble fibrinogen. This step leads to rapid platelet aggregation which physically plugs ruptured endothelial surface. Fibrinogen binding enhances SELP expression in activated platelets. ITGAV:ITGB3 binds to fractalkine (CX3CL1) and acts as its coreceptor in CX3CR1-dependent fractalkine signaling. ITGAV:ITGB3 binds to NRG1 (via EGF domain) and this binding is essential for NRG1-ERBB signaling. ITGAV:ITGB3 binds to FGF1 and this binding is essential for FGF1 signaling. ITGAV:ITGB3 binds to FGF2 and this binding is essential for FGF2 signaling. ITGAV:ITGB3 binds to IGF1 and this binding is essential for IGF1 signaling. ITGAV:ITGB3 binds to IGF2 and this binding is essential for IGF2 signaling. ITGAV:ITGB3 binds to IL1B and this binding is essential for IL1B signaling. ITGAV:ITGB3 binds to PLA2G2A via a site (site 2) which is distinct from the classical ligand-binding site (site 1) and this induces integrin conformational changes and enhanced ligand binding to site 1. ITGAV:ITGB3 acts as a receptor for fibrillin-1 (FBN1) and mediates R-G-D-dependent cell adhesion to FBN1. In brain, plays a role in synaptic transmission and plasticity. Involved in the regulation of the serotonin neurotransmission, is required to localize to specific compartments within the synapse the serotonin receptor SLC6A4 and for an appropriate reuptake of serotonin. Controls excitatory synaptic strength by regulating GRIA2-containing AMPAR endocytosis, which affects AMPAR abundance and composition. ITGAV:ITGB3 act as a receptor for CD40LG. ITGAV:ITGB3 acts as a receptor for IBSP and promotes cell adhesion and migration to IBSP. Functionally, (Microbial infection) Integrin ITGAV:ITGB3 acts as a receptor for Herpes virus 8/HHV-8. Its function is as follows. (Microbial infection) Integrin ITGAV:ITGB3 acts as a receptor for Coxsackievirus A9. (Microbial infection) Acts as a receptor for Hantaan virus. In terms of biological role, (Microbial infection) Integrin ITGAV:ITGB3 acts as a receptor for Cytomegalovirus/HHV-5. Functionally, (Microbial infection) Integrin ITGA5:ITGB3 acts as a receptor for Human metapneumovirus. Its function is as follows. (Microbial infection) Integrin ITGAV:ITGB3 acts aP05556s a receptor for Human parechovirus 1. (Microbial infection) Integrin ITGAV:ITGB3 acts as a receptor for West nile virus. In terms of biological role, (Microbial infection) In case of HIV-1 infection, the interaction with extracellular viral Tat protein seems to enhance angiogenesis in Kaposi's sarcoma lesions. This chain is Integrin beta-3, found in Homo sapiens (Human).